Here is a 309-residue protein sequence, read N- to C-terminus: MSEINISAAAVKELREKTGAGMMDCKKALIETSGNFEKASDFLRKKGLAAAAKKAGRIASEGLTAAKVDGLTGVVIEVNSETDFVARNEQFQDLVKDIANFAVIAKTIDTLKTFKMQSGKSVEEEIIENIATIGENLTLRRMDILEISEGAIGSYVHNEVVPNLGKISVLVGLASNAKDKAKLEALAKQIAVHVAGNNPQSIDDSSLDQALIERERKVFFEKSKEEGKPDNIIAKMVEGRIRKFFSEVVLLQQNFLFEPKLTVAEVIKNAEKELGAEIKIAKFIRYELGEGIEHEEKNFADEVAAITQG.

The interval 82–85 is involved in Mg(2+) ion dislocation from EF-Tu; that stretch reads TDFV.

It belongs to the EF-Ts family.

The protein localises to the cytoplasm. In terms of biological role, associates with the EF-Tu.GDP complex and induces the exchange of GDP to GTP. It remains bound to the aminoacyl-tRNA.EF-Tu.GTP complex up to the GTP hydrolysis stage on the ribosome. The chain is Elongation factor Ts from Rickettsia peacockii (strain Rustic).